The sequence spans 1071 residues: Exportin-1 (1071 aa).

Residues 46 to 112 (AQEVLTHLKE…KKYVVGLIIK (67 aa)) form the Importin N-terminal domain. HEAT repeat units lie at residues 217-240 (QNAPLVHATLETLLRFLNWIPLGY), 241-277 (IFETKLISTLIYKFLNVPMFRNVSLKCLTEIAGVSVS), 354-472 (MLLV…YVDT), 515-553 (RFLVTVIKDLLGLCEQKRGKDNKAIIASNIMYIVGQYPR), 560-597 (KFLKTVVNKLFEFMHETHDGVQDMACDTFIKIAQKCRR), and 602-639 (VQVGEVMPFIDEILNNINTIICDLQPQQVHTFYEAVGY). The tract at residues 327-450 (CTFLKEHGQL…VREFMKDTDS (124 aa)) is necessary for interaction with Ran and nuclear export complex formation. Residue Ser391 is modified to Phosphoserine. The interval 411–481 (TVLSKVRLLM…TEIIMTKKLQ (71 aa)) is necessary for interaction with RANBP3. N6-acetyllysine is present on Lys446. Phosphothreonine is present on Thr448. Ser450 carries the phosphoserine modification. Tyr454 bears the Phosphotyrosine mark. The residue at position 693 (Lys693) is an N6-acetyllysine. 3 HEAT repeats span residues 775-813 (NFVPPLLDAVLIDYQRNVPAAREPEVLSTMAIIVNKLGG), 885-916 (TMRNVADTGLQILFTLLQNVAQEEAAAQSFYQ), and 917-954 (TYFCDILQHIFSVVTDTSHTAGLTMHASILAYMFNLVE). A phosphoserine mark is found at Ser966 and Ser1031. An HEAT 10 repeat occupies 1002–1039 (FSLNQDIPAFKEHLRDFLVQIKEFAGEDTSDLFLEERE).

This sequence belongs to the exportin family. As to quaternary structure, found in a U snRNA export complex with PHAX/RNUXA, NCBP1/CBP80, NCBP2/CBP20, RAN, XPO1 and m7G-capped RNA. Component of a nuclear export receptor complex composed of KPNB1, RAN, SNUPN and XPO1. Found in a trimeric export complex with SNUPN, RAN and XPO1. Found in a nuclear export complex with RANBP3 and RAN. Found in a 60S ribosomal subunit export complex with NMD3, RAN, XPO1. Interacts with DDX3X, NMD3, NUP42, NUP88, NUP214, RANBP3 and TERT. Interacts with NEMF (via its N-terminus). Interacts with the monomeric form of BIRC5/survivin deacetylated at 'Lys-129'. Interacts with DTNBP1 and SERTAD2; the interactions translocate DTNBP1 and SERTAD2 out of the nucleus. Interacts with ATF2. Interacts with SLC35G1 and STIM1. Interacts with DCAF8. Interacts with CPEB3. Interacts with HAX1. Interacts with BOK; translocates to the cytoplasm. Interacts with HSP90AB1. Interacts with LRPPRC; interacts with LRPPRC alone and also when LRPPRC is in complex with EIF4E and with EIF4E sensitivity element (4ESE)-containing mRNAs to form an EIF4E-dependent mRNA export complex.

It is found in the cytoplasm. The protein resides in the nucleus. Its subcellular location is the nucleoplasm. The protein localises to the cajal body. It localises to the nucleolus. In terms of biological role, mediates the nuclear export of cellular proteins (cargos) bearing a leucine-rich nuclear export signal (NES) and of RNAs. In the nucleus, in association with RANBP3, binds cooperatively to the NES on its target protein and to the GTPase Ran in its active GTP-bound form. Docking of this complex to the nuclear pore complex (NPC) is mediated through binding to nucleoporins. Upon transit of a nuclear export complex into the cytoplasm, disassembling of the complex and hydrolysis of Ran-GTP to Ran-GDP (induced by RANBP1 and RANGAP1, respectively) cause release of the cargo from the export receptor. The directionality of nuclear export is thought to be conferred by an asymmetric distribution of the GTP- and GDP-bound forms of Ran between the cytoplasm and nucleus. Involved in U3 snoRNA transport from Cajal bodies to nucleoli. Binds to late precursor U3 snoRNA bearing a TMG cap. The polypeptide is Exportin-1 (Xpo1) (Rattus norvegicus (Rat)).